The sequence spans 482 residues: Glutamate synthase [NADPH] small chain (482 aa).

Residues 39 to 72 (ERANEQANRCSQCGVPFCQVHCPVSNNIPDWLKL) enclose the 4Fe-4S ferredoxin-type domain. Residues C95, C99, C105, and C109 each coordinate [4Fe-4S] cluster.

Aggregate of 4 catalytic active heterodimers, consisting of a large and a small subunit. Requires [4Fe-4S] cluster as cofactor.

It carries out the reaction 2 L-glutamate + NADP(+) = L-glutamine + 2-oxoglutarate + NADPH + H(+). Its pathway is amino-acid biosynthesis; L-glutamate biosynthesis via GLT pathway; L-glutamate from 2-oxoglutarate and L-glutamine (NADP(+) route): step 1/1. The protein operates within energy metabolism; nitrogen metabolism. This is Glutamate synthase [NADPH] small chain (gltD) from Azospirillum brasilense.